The following is a 1095-amino-acid chain: DNA-directed RNA polymerase subunit beta (1095 aa).

A disordered region spans residues 1069-1095 (DLMQDVNPRRSTPSRPTYESLGKEYEE).

This sequence belongs to the RNA polymerase beta chain family. As to quaternary structure, in cyanobacteria the RNAP catalytic core is composed of 2 alpha, 1 beta, 1 beta', 1 gamma and 1 omega subunit. When a sigma factor is associated with the core the holoenzyme is formed, which can initiate transcription.

It catalyses the reaction RNA(n) + a ribonucleoside 5'-triphosphate = RNA(n+1) + diphosphate. DNA-dependent RNA polymerase catalyzes the transcription of DNA into RNA using the four ribonucleoside triphosphates as substrates. This Prochlorococcus marinus (strain NATL1A) protein is DNA-directed RNA polymerase subunit beta.